The primary structure comprises 279 residues: 4-hydroxy-3-methylbut-2-enyl diphosphate reductase (279 aa).

[4Fe-4S] cluster is bound at residue Cys12. (2E)-4-hydroxy-3-methylbut-2-enyl diphosphate-binding residues include His36 and His70. Dimethylallyl diphosphate-binding residues include His36 and His70. Isopentenyl diphosphate is bound by residues His36 and His70. Cys92 is a [4Fe-4S] cluster binding site. Residue His120 participates in (2E)-4-hydroxy-3-methylbut-2-enyl diphosphate binding. His120 is a dimethylallyl diphosphate binding site. His120 is a binding site for isopentenyl diphosphate. The Proton donor role is filled by Glu122. Thr158 serves as a coordination point for (2E)-4-hydroxy-3-methylbut-2-enyl diphosphate. [4Fe-4S] cluster is bound at residue Cys186. (2E)-4-hydroxy-3-methylbut-2-enyl diphosphate-binding residues include Ser214, Ser215, Asn216, and Ser258. The dimethylallyl diphosphate site is built by Ser214, Ser215, Asn216, and Ser258. Isopentenyl diphosphate-binding residues include Ser214, Ser215, Asn216, and Ser258.

The protein belongs to the IspH family. The cofactor is [4Fe-4S] cluster.

It catalyses the reaction isopentenyl diphosphate + 2 oxidized [2Fe-2S]-[ferredoxin] + H2O = (2E)-4-hydroxy-3-methylbut-2-enyl diphosphate + 2 reduced [2Fe-2S]-[ferredoxin] + 2 H(+). The enzyme catalyses dimethylallyl diphosphate + 2 oxidized [2Fe-2S]-[ferredoxin] + H2O = (2E)-4-hydroxy-3-methylbut-2-enyl diphosphate + 2 reduced [2Fe-2S]-[ferredoxin] + 2 H(+). It participates in isoprenoid biosynthesis; dimethylallyl diphosphate biosynthesis; dimethylallyl diphosphate from (2E)-4-hydroxy-3-methylbutenyl diphosphate: step 1/1. Its pathway is isoprenoid biosynthesis; isopentenyl diphosphate biosynthesis via DXP pathway; isopentenyl diphosphate from 1-deoxy-D-xylulose 5-phosphate: step 6/6. Functionally, catalyzes the conversion of 1-hydroxy-2-methyl-2-(E)-butenyl 4-diphosphate (HMBPP) into a mixture of isopentenyl diphosphate (IPP) and dimethylallyl diphosphate (DMAPP). Acts in the terminal step of the DOXP/MEP pathway for isoprenoid precursor biosynthesis. This chain is 4-hydroxy-3-methylbut-2-enyl diphosphate reductase, found in Campylobacter fetus subsp. fetus (strain 82-40).